The following is a 745-amino-acid chain: Copper-transporting ATPase (745 aa).

An HMA domain is found at 1–67; that stretch reads MKESFYIEGM…LIEKLGYSPK (67 aa). Residues 1–83 lie on the Cytoplasmic side of the membrane; sequence MKESFYIEGM…KKEFFSPNVK (83 aa). The Cu cation site is built by C12 and C15. Residues 84–104 traverse the membrane as a helical segment; that stretch reads LALAVIFTLFVVYLSMGAMLS. Residues 105-124 are Extracellular-facing; sequence PSLLPKSLLAIDNHSNFLNA. A helical transmembrane segment spans residues 125-144; sequence CLQLIGTLIVMHWGRDFYIQ. The Cytoplasmic portion of the chain corresponds to 145–151; sequence GFKALWH. Residues 152 to 172 traverse the membrane as a helical segment; that stretch reads RQPNMSSLIAIGTSAALISSL. The Extracellular portion of the chain corresponds to 173 to 194; that stretch reads WQLYLVYTDHYTDQWSYGHYYF. A helical transmembrane segment spans residues 195 to 215; sequence ESVCVILMFVMVGKRIENVSK. Topologically, residues 216-343 are cytoplasmic; the sequence is DKALDAMQAL…KAEISRLADK (128 aa). The helical transmembrane segment at 344-366 threads the bilayer; it reads VSSVFVPSVIAIAILAFVVWLII. Residues 367–379 are Extracellular-facing; that stretch reads APKPDFWWNFGIA. Residues 380 to 397 form a helical membrane-spanning segment; it reads LEVFVSVLVISCPCALGL. At 398–685 the chain is on the cytoplasmic side; that stretch reads ATLMSILVAN…KLSQATIKNI (288 aa). Catalysis depends on D435, which acts as the 4-aspartylphosphate intermediate. 2 residues coordinate Mg(2+): D631 and D635. The helical transmembrane segment at 686–705 threads the bilayer; it reads KENLFWAFCYNSVFIPLACG. The Extracellular portion of the chain corresponds to 706 to 716; that stretch reads VLYKANIMLSP. Residues 717-735 traverse the membrane as a helical segment; sequence AIAGLAMSLSSVSVVLNSQ. The Cytoplasmic portion of the chain corresponds to 736–745; it reads RLRNFKIKDH.

This sequence belongs to the cation transport ATPase (P-type) (TC 3.A.3) family. Type IB subfamily.

It localises to the cell membrane. It carries out the reaction Cu(2+)(in) + ATP + H2O = Cu(2+)(out) + ADP + phosphate + H(+). Functionally, probably involved in copper export. The polypeptide is Copper-transporting ATPase (copA) (Helicobacter pylori (Campylobacter pylori)).